The sequence spans 184 residues: ATP synthase subunit b, chloroplastic (184 aa).

The helical transmembrane segment at 27–49 (LATNPINLSVVFGVLIFFGKGVL) threads the bilayer.

This sequence belongs to the ATPase B chain family. As to quaternary structure, F-type ATPases have 2 components, F(1) - the catalytic core - and F(0) - the membrane proton channel. F(1) has five subunits: alpha(3), beta(3), gamma(1), delta(1), epsilon(1). F(0) has four main subunits: a(1), b(1), b'(1) and c(10-14). The alpha and beta chains form an alternating ring which encloses part of the gamma chain. F(1) is attached to F(0) by a central stalk formed by the gamma and epsilon chains, while a peripheral stalk is formed by the delta, b and b' chains.

The protein localises to the plastid. Its subcellular location is the chloroplast thylakoid membrane. Functionally, f(1)F(0) ATP synthase produces ATP from ADP in the presence of a proton or sodium gradient. F-type ATPases consist of two structural domains, F(1) containing the extramembraneous catalytic core and F(0) containing the membrane proton channel, linked together by a central stalk and a peripheral stalk. During catalysis, ATP synthesis in the catalytic domain of F(1) is coupled via a rotary mechanism of the central stalk subunits to proton translocation. Its function is as follows. Component of the F(0) channel, it forms part of the peripheral stalk, linking F(1) to F(0). The sequence is that of ATP synthase subunit b, chloroplastic from Crucihimalaya wallichii (Rock-cress).